The sequence spans 218 residues: Probable transaldolase 2 (218 aa).

The active-site Schiff-base intermediate with substrate is the Lys-83.

Belongs to the transaldolase family. Type 3B subfamily.

It is found in the cytoplasm. It carries out the reaction D-sedoheptulose 7-phosphate + D-glyceraldehyde 3-phosphate = D-erythrose 4-phosphate + beta-D-fructose 6-phosphate. It participates in carbohydrate degradation; pentose phosphate pathway; D-glyceraldehyde 3-phosphate and beta-D-fructose 6-phosphate from D-ribose 5-phosphate and D-xylulose 5-phosphate (non-oxidative stage): step 2/3. Transaldolase is important for the balance of metabolites in the pentose-phosphate pathway. The sequence is that of Probable transaldolase 2 from Listeria innocua serovar 6a (strain ATCC BAA-680 / CLIP 11262).